Consider the following 906-residue polypeptide: Cadherin-2 (906 aa).

Positions 1–25 (MCRIAGALRTLLPLLAALLQASVEA) are cleaved as a signal peptide. A propeptide spanning residues 26–159 (SGEIALCKTG…HSGHLQRQKR (134 aa)) is cleaved from the precursor. Ser96 and Ser135 each carry phosphoserine; by FAM20C. Cadherin domains lie at 160–267 (DWVI…RPEF), 268–382 (LHQV…PPEF), 383–497 (TAMT…NPYF), 498–603 (APNP…DNAP), and 604–714 (QVLP…DVDR). Residues 160 to 724 (DWVIPPINLP…IVGAGLGTGA (565 aa)) lie on the Extracellular side of the membrane. Residue Glu170 coordinates Ca(2+). Asn190 is a glycosylation site (N-linked (GlcNAc...) asparagine). Residues Asp226, Glu228, Asp259, Met260, Asn261, Asp262, and Asn263 each contribute to the Ca(2+) site. A glycan (N-linked (GlcNAc...) asparagine) is linked at Asn273. Residues Asp293, Asp295, and Asn301 each contribute to the Ca(2+) site. N-linked (GlcNAc...) asparagine glycosylation is present at Asn325. Asp353 is a binding site for Ca(2+). Residues Asn402, Asn572, Asn651, and Asn692 are each glycosylated (N-linked (GlcNAc...) asparagine). Residues 725-745 (IIAILLCIIILLILVLMFVVW) traverse the membrane as a helical segment. Over 746–906 (MKRRDKERQA…LADMYGGGDD (161 aa)) the chain is Cytoplasmic. A compositionally biased stretch (low complexity) spans 863–880 (SGSTAGSLSSLNSSSSGG). Positions 863 to 884 (SGSTAGSLSSLNSSSSGGEQDY) are disordered.

Homodimer (via extracellular region). Can also form heterodimers with other cadherins (via extracellular region). Dimerization occurs in trans, i.e. with a cadherin chain from another cell. Interacts with CDCP1. Interacts with PCDH8; this complex may also include TAOK2. The interaction with PCDH8 may lead to internalization through TAOK2/p38 MAPK pathway. Identified in a complex containing FGFR4, NCAM1, CDH2, PLCG1, FRS2, SRC, SHC1, GAP43 and CTTN. May interact with OBSCN (via protein kinase domain 2). Interacts with FBXO45. In terms of processing, cleaved by MMP24. Ectodomain cleavage leads to the generation of a soluble 90 kDa N-terminal soluble fragment and a 45 kDa membrane-bound C-terminal fragment 1 (CTF1), which is further cleaved by gamma-secretase into a 35 kDa. Cleavage in neural stem cells by MMP24 affects CDH2-mediated anchorage of neural stem cells to ependymocytes in the adult subependymal zone, leading to modulate neural stem cell quiescence. Post-translationally, may be phosphorylated by OBSCN.

Its subcellular location is the cell membrane. The protein resides in the sarcolemma. It is found in the cell junction. It localises to the cell surface. The protein localises to the desmosome. Its subcellular location is the adherens junction. In terms of biological role, calcium-dependent cell adhesion protein; preferentially mediates homotypic cell-cell adhesion by dimerization with a CDH2 chain from another cell. Cadherins may thus contribute to the sorting of heterogeneous cell types. Acts as a regulator of neural stem cells quiescence by mediating anchorage of neural stem cells to ependymocytes in the adult subependymal zone: upon cleavage by MMP24, CDH2-mediated anchorage is affected, leading to modulate neural stem cell quiescence. Plays a role in cell-to-cell junction formation between pancreatic beta cells and neural crest stem (NCS) cells, promoting the formation of processes by NCS cells. Required for proper neurite branching. Required for pre- and postsynaptic organization. CDH2 may be involved in neuronal recognition mechanism. In hippocampal neurons, may regulate dendritic spine density. This Homo sapiens (Human) protein is Cadherin-2 (CDH2).